A 319-amino-acid polypeptide reads, in one-letter code: D-alanine--D-alanine ligase (319 aa).

An ATP-grasp domain is found at 120-315; that stretch reads KRVLAQAGVP…YPELLRRLVE (196 aa). Position 147–198 (147–198) interacts with ATP; the sequence is DPPFFVKPANTGSSVGISRVERFQDLEAALALAFRYDEKAVVEKALSPVREL. Residues D270, E282, and N284 each coordinate Mg(2+).

Belongs to the D-alanine--D-alanine ligase family. It depends on Mg(2+) as a cofactor. Mn(2+) is required as a cofactor.

Its subcellular location is the cytoplasm. It carries out the reaction 2 D-alanine + ATP = D-alanyl-D-alanine + ADP + phosphate + H(+). The protein operates within cell wall biogenesis; peptidoglycan biosynthesis. Functionally, cell wall formation. The protein is D-alanine--D-alanine ligase of Thermus thermophilus (strain ATCC 27634 / DSM 579 / HB8).